Here is a 286-residue protein sequence, read N- to C-terminus: Prepilin leader peptidase/N-methyltransferase (286 aa).

Residues 11 to 31 (LGIFFVGLFSLMVGSFLNVVI) traverse the membrane as a helical segment. Cys-74, Cys-77, Cys-99, and Cys-102 together coordinate Zn(2+). A run of 6 helical transmembrane segments spans residues 106 to 126 (ISAR…IVAF), 132 to 152 (LSLG…FIDA), 161 to 181 (LTLP…FINL), 185 to 205 (VIGA…FKLI), 231 to 251 (LPII…GIGL), and 257 to 277 (MPFG…GAQI).

It belongs to the peptidase A24 family. It depends on Zn(2+) as a cofactor.

The protein resides in the cell inner membrane. It catalyses the reaction Typically cleaves a -Gly-|-Phe- bond to release an N-terminal, basic peptide of 5-8 residues from type IV prepilin, and then N-methylates the new N-terminal amino group, the methyl donor being S-adenosyl-L-methionine.. Its function is as follows. Plays an essential role in type IV pili and type II pseudopili formation by proteolytically removing the leader sequence from substrate proteins and subsequently monomethylating the alpha-amino group of the newly exposed N-terminal phenylalanine. This Dichelobacter nodosus (Bacteroides nodosus) protein is Prepilin leader peptidase/N-methyltransferase (fimP).